The primary structure comprises 203 residues: ATP-dependent Clp protease proteolytic subunit (203 aa).

Ser-107 functions as the Nucleophile in the catalytic mechanism. His-132 is an active-site residue.

Belongs to the peptidase S14 family. Fourteen ClpP subunits assemble into 2 heptameric rings which stack back to back to give a disk-like structure with a central cavity, resembling the structure of eukaryotic proteasomes.

It is found in the cytoplasm. The enzyme catalyses Hydrolysis of proteins to small peptides in the presence of ATP and magnesium. alpha-casein is the usual test substrate. In the absence of ATP, only oligopeptides shorter than five residues are hydrolyzed (such as succinyl-Leu-Tyr-|-NHMec, and Leu-Tyr-Leu-|-Tyr-Trp, in which cleavage of the -Tyr-|-Leu- and -Tyr-|-Trp bonds also occurs).. In terms of biological role, cleaves peptides in various proteins in a process that requires ATP hydrolysis. Has a chymotrypsin-like activity. Plays a major role in the degradation of misfolded proteins. The protein is ATP-dependent Clp protease proteolytic subunit of Pelagibacter ubique (strain HTCC1062).